The chain runs to 324 residues: Phosphomevalonate decarboxylase (324 aa).

It belongs to the phosphomevalonate decarboxylase family.

It catalyses the reaction (R)-5-phosphomevalonate + ATP = isopentenyl phosphate + ADP + phosphate + CO2. With respect to regulation, is strongly inhibited by 6-fluoromevalonate monophosphate but shows negligible inhibition by 6-fluoromevalonate diphosphate (a potent inhibitor of the classical mevalonate pathway). In terms of biological role, catalyzes the decarboxylation of mevalonate 5-phosphate (MVAP) to isopentenyl phosphate (IP). Functions in an alternate mevalonate (MVA) pathway leading to isopentenyl diphosphate (IPP), a key precursor for the biosynthesis of isoprenoid compounds such as archaeal membrane lipids. The polypeptide is Phosphomevalonate decarboxylase (mvaD) (Haloferax volcanii (strain ATCC 29605 / DSM 3757 / JCM 8879 / NBRC 14742 / NCIMB 2012 / VKM B-1768 / DS2) (Halobacterium volcanii)).